A 663-amino-acid polypeptide reads, in one-letter code: DNA topoisomerase 4 subunit B (663 aa).

Residues Tyr-7, Asn-47, Asp-74, 114–120 (GLHGVGA), and Lys-341 each bind ATP. The segment at 386-416 (REAARKAREDARSGKKNKRKDTLLSGKLTPA) is disordered. The segment covering 387 to 398 (EAARKAREDARS) has biased composition (basic and acidic residues). In terms of domain architecture, Toprim spans 424–538 (NELYLVEGDS…AGRVFIALPP (115 aa)). Mg(2+) is bound by residues Glu-430, Asp-503, and Asp-505.

This sequence belongs to the type II topoisomerase family. ParE type 2 subfamily. As to quaternary structure, heterotetramer composed of ParC and ParE. Mg(2+) is required as a cofactor. It depends on Mn(2+) as a cofactor. Requires Ca(2+) as cofactor.

The enzyme catalyses ATP-dependent breakage, passage and rejoining of double-stranded DNA.. In terms of biological role, topoisomerase IV is essential for chromosome segregation. It relaxes supercoiled DNA. Performs the decatenation events required during the replication of a circular DNA molecule. This chain is DNA topoisomerase 4 subunit B, found in Staphylococcus aureus (strain Mu50 / ATCC 700699).